The following is a 74-amino-acid chain: Progonadoliberin-3 (74 aa).

Residues 1-15 (VRVVVLALVAQVTLS) form the signal peptide. Gln16 is modified (pyrrolidone carboxylic acid). Residue Gly25 is modified to Glycine amide.

This sequence belongs to the GnRH family.

The protein localises to the secreted. Functionally, stimulates the secretion of gonadotropins. This Oncorhynchus tshawytscha (Chinook salmon) protein is Progonadoliberin-3 (gnrh3).